Consider the following 553-residue polypeptide: Muellerian-inhibiting factor (553 aa).

An N-terminal signal peptide occupies residues 1-22 (MQGPHLSLLLLLLATMGAVLQA). Residues 23-445 (DTVEELTNTR…GREGRGRAGR (423 aa)) constitute a propeptide that is removed on maturation. Residues asparagine 325 and asparagine 409 are each glycosylated (N-linked (GlcNAc...) asparagine). 3 disulfides stabilise this stretch: cysteine 455-cysteine 519, cysteine 481-cysteine 550, and cysteine 485-cysteine 552.

Belongs to the TGF-beta family. As to quaternary structure, homodimer; disulfide-linked. In terms of processing, preproprotein is proteolytically processed to generate N- and C-terminal cleavage products that homodimerize and associate to form a biologically active non-covalent complex. Binding of the non-covalent complex to AMHR2 induces dissociation of the pro-region from the mature C-terminal dimer. The N-terminal portion of the protein, despite having no intrinsic activity, has the role of amplifying the activity of the C-terminus. As to expression, mainly expressed in granulosa cells from preantral and small antral follicles.

It localises to the secreted. Its function is as follows. Plays an important role in several reproductive functions. Induces Muellerian duct regression during male fetal sexual differentiation and plays a role in Leydig cell differentiation and function. In female acts as a negative regulator of the primordial to primary follicle transition and decreases FSH sensitivity of growing follicles. AMH signals by binding to a specific type-II receptor, AMHR2, that heterodimerizes with type-I receptors (ACVR1 and BMPR1A), and recruiting SMAD proteins that are translocated to the nucleus to regulate target gene expression. This chain is Muellerian-inhibiting factor (Amh), found in Rattus norvegicus (Rat).